Reading from the N-terminus, the 686-residue chain is Calponin homology and LIM domain-containing protein (686 aa).

The Calponin-homology (CH) domain occupies 15–120 (ELALDESRDW…ITLYWLGRAA (106 aa)). LIM zinc-binding domains are found at residues 139–200 (MNCS…ATNL) and 219–279 (NKCS…SCGK). Over residues 305–314 (KQVMDKDGHD) the composition is skewed to basic and acidic residues. The disordered stretch occupies residues 305 to 345 (KQVMDKDGHDHHHHNHNKPTTTTTTTNSNSPLAKKKSDSCK). The span at 322–333 (KPTTTTTTTNSN) shows a compositional bias: low complexity. LIM zinc-binding domains are found at residues 373-435 (GTCG…NNKS), 437-495 (KNCH…LNQY), 519-579 (DRCV…IQQS), and 583-658 (DHCA…ASSS).

In terms of assembly, interacts with limF and rab21.

In terms of biological role, involved in the regulation of phagocytosis. May repress rab21. The chain is Calponin homology and LIM domain-containing protein (ChLim) from Dictyostelium discoideum (Social amoeba).